Consider the following 80-residue polypeptide: Acyl carrier protein (80 aa).

The region spanning 1–79 is the Carrier domain; that stretch reads MSQEEILQKV…DAVKFIEAKK (79 aa). An O-(pantetheine 4'-phosphoryl)serine modification is found at Ser39.

Belongs to the acyl carrier protein (ACP) family. In terms of processing, 4'-phosphopantetheine is transferred from CoA to a specific serine of apo-ACP by AcpS. This modification is essential for activity because fatty acids are bound in thioester linkage to the sulfhydryl of the prosthetic group.

The protein localises to the cytoplasm. It functions in the pathway lipid metabolism; fatty acid biosynthesis. Its function is as follows. Carrier of the growing fatty acid chain in fatty acid biosynthesis. The protein is Acyl carrier protein of Prochlorococcus marinus (strain MIT 9515).